A 164-amino-acid polypeptide reads, in one-letter code: HTH-type transcriptional regulator IscR (164 aa).

One can recognise an HTH rrf2-type domain in the interval 2–131; sequence RLTSKGRYAV…GSISLEELVK (130 aa). A DNA-binding region (H-T-H motif) is located at residues 28 to 51; sequence LADISERQGISLSYLEQLFSRLRK. Positions 92, 98, and 104 each coordinate [2Fe-2S] cluster. A disordered region spans residues 140-164; the sequence is DRQDSDKRRTPNGRPQETINVNLRA. Polar residues predominate over residues 152 to 164; sequence GRPQETINVNLRA.

The cofactor is [2Fe-2S] cluster.

Regulates the transcription of several operons and genes involved in the biogenesis of Fe-S clusters and Fe-S-containing proteins. The chain is HTH-type transcriptional regulator IscR from Xenorhabdus nematophila (strain ATCC 19061 / DSM 3370 / CCUG 14189 / LMG 1036 / NCIMB 9965 / AN6).